Here is a 270-residue protein sequence, read N- to C-terminus: Hemin import ATP-binding protein HmuV (270 aa).

The ABC transporter domain maps to 5-242 (LEAEAATYSV…SLINRVFDIE (238 aa)). 37 to 44 (GPNGAGKS) contacts ATP.

The protein belongs to the ABC transporter superfamily. Heme (hemin) importer (TC 3.A.1.14.5) family. The complex is composed of two ATP-binding proteins (HmuV), two transmembrane proteins (HmuU) and a solute-binding protein (HmuT).

Its subcellular location is the cell inner membrane. Its function is as follows. Part of the ABC transporter complex HmuTUV involved in hemin import. Responsible for energy coupling to the transport system. This chain is Hemin import ATP-binding protein HmuV, found in Rhodopseudomonas palustris (strain BisA53).